A 108-amino-acid chain; its full sequence is uncharacterized protein (108 aa).

Residues phenylalanine 7–leucine 27 traverse the membrane as a helical segment.

It to N.crassa NCU05373.1.

It is found in the membrane. This is an uncharacterized protein from Schizosaccharomyces pombe (strain 972 / ATCC 24843) (Fission yeast).